Here is an 86-residue protein sequence, read N- to C-terminus: Putative membrane protein insertion efficiency factor (86 aa).

It belongs to the UPF0161 family.

Its subcellular location is the cell membrane. Its function is as follows. Could be involved in insertion of integral membrane proteins into the membrane. In Streptococcus pyogenes serotype M1, this protein is Putative membrane protein insertion efficiency factor.